Consider the following 1088-residue polypeptide: RNA-directed RNA polymerase (1088 aa).

In terms of domain architecture, RdRp catalytic spans 501-687 (LSYGDVTRFL…AKRYIAGGKI (187 aa)).

It belongs to the reoviridae RNA-directed RNA polymerase family. As to quaternary structure, interacts with VP3 (Potential). Interacts with VP2; this interaction activates VP1. Interacts with NSP5; this interaction is probably necessary for the formation of functional virus factories. Interacts with NSP2; this interaction is weak. The cofactor is Mg(2+).

It localises to the virion. It catalyses the reaction RNA(n) + a ribonucleoside 5'-triphosphate = RNA(n+1) + diphosphate. RNA-directed RNA polymerase that is involved in both transcription and genome replication. Together with VP3 capping enzyme, forms an enzyme complex positioned near the channels situated at each of the five-fold vertices of the core. Following infection, the outermost layer of the virus is lost, leaving a double-layered particle (DLP) made up of the core and VP6 shell. VP1 then catalyzes the transcription of fully conservative plus-strand genomic RNAs that are extruded through the DLP's channels into the cytoplasm where they function as mRNAs for translation of viral proteins. One copy of each of the viral (+)RNAs is also recruited during core assembly, together with newly synthesized polymerase complexes and VP2. The polymerase of these novo-formed particles catalyzes the synthesis of complementary minus-strands leading to dsRNA formation. To do so, the polymerase specifically recognizes and binds 4 bases 5'-UGUG-3' in the conserved 3'-sequence of plus-strand RNA templates. VP2 presumably activates the autoinhibited VP1-RNA complex to coordinate packaging and genome replication. Once dsRNA synthesis is complete, the polymerase switches to the transcriptional mode, thus providing secondary transcription. This Rotavirus A (strain RVA/SA11-Patton/G3P[X]) (RV-A) protein is RNA-directed RNA polymerase.